The sequence spans 152 residues: Small ribosomal subunit protein uS15 (152 aa).

Positions 1–10 (MAKMHTRTKG) are enriched in basic residues. The tract at residues 1-26 (MAKMHTRTKGKSGSTKPIRSESPAWS) is disordered. Over residues 11 to 26 (KSGSTKPIRSESPAWS) the composition is skewed to polar residues.

Belongs to the universal ribosomal protein uS15 family. Part of the 30S ribosomal subunit.

This chain is Small ribosomal subunit protein uS15, found in Methanococcoides burtonii (strain DSM 6242 / NBRC 107633 / OCM 468 / ACE-M).